Reading from the N-terminus, the 214-residue chain is tRNA (guanine-N(7)-)-methyltransferase (214 aa).

4 residues coordinate S-adenosyl-L-methionine: Glu-43, Glu-68, Asp-95, and Asp-117. Asp-117 is an active-site residue. Residues Lys-121, Asp-153, and 190 to 193 each bind substrate; that span reads TEYE.

It belongs to the class I-like SAM-binding methyltransferase superfamily. TrmB family.

The catalysed reaction is guanosine(46) in tRNA + S-adenosyl-L-methionine = N(7)-methylguanosine(46) in tRNA + S-adenosyl-L-homocysteine. The protein operates within tRNA modification; N(7)-methylguanine-tRNA biosynthesis. Functionally, catalyzes the formation of N(7)-methylguanine at position 46 (m7G46) in tRNA. The chain is tRNA (guanine-N(7)-)-methyltransferase from Staphylococcus aureus (strain MSSA476).